The chain runs to 218 residues: dTTP/UTP pyrophosphatase (218 aa).

Asp69 (proton acceptor) is an active-site residue.

Belongs to the Maf family. YhdE subfamily. It depends on a divalent metal cation as a cofactor.

The protein resides in the cytoplasm. It carries out the reaction dTTP + H2O = dTMP + diphosphate + H(+). The catalysed reaction is UTP + H2O = UMP + diphosphate + H(+). Nucleoside triphosphate pyrophosphatase that hydrolyzes dTTP and UTP. May have a dual role in cell division arrest and in preventing the incorporation of modified nucleotides into cellular nucleic acids. This is dTTP/UTP pyrophosphatase from Thermomicrobium roseum (strain ATCC 27502 / DSM 5159 / P-2).